The chain runs to 37 residues: Large ribosomal subunit protein bL36 (37 aa).

The protein belongs to the bacterial ribosomal protein bL36 family.

The protein is Large ribosomal subunit protein bL36 of Moorella thermoacetica (strain ATCC 39073 / JCM 9320).